A 45-amino-acid polypeptide reads, in one-letter code: Photosystem II reaction center protein K (45 aa).

A propeptide spanning residues 1–8 (METALLLA) is cleaved from the precursor. Residues 24-44 (LPLIPLFFLLLAFVWQASVGF) form a helical membrane-spanning segment.

This sequence belongs to the PsbK family. As to quaternary structure, PSII is composed of 1 copy each of membrane proteins PsbA, PsbB, PsbC, PsbD, PsbE, PsbF, PsbH, PsbI, PsbJ, PsbK, PsbL, PsbM, PsbT, PsbX, PsbY, PsbZ, Psb30/Ycf12, peripheral proteins PsbO, CyanoQ (PsbQ), PsbU, PsbV and a large number of cofactors. It forms dimeric complexes.

It is found in the cellular thylakoid membrane. Functionally, one of the components of the core complex of photosystem II (PSII). PSII is a light-driven water:plastoquinone oxidoreductase that uses light energy to abstract electrons from H(2)O, generating O(2) and a proton gradient subsequently used for ATP formation. It consists of a core antenna complex that captures photons, and an electron transfer chain that converts photonic excitation into a charge separation. The protein is Photosystem II reaction center protein K of Microcystis aeruginosa (strain NIES-843 / IAM M-2473).